We begin with the raw amino-acid sequence, 542 residues long: Glucans biosynthesis protein G (542 aa).

The signal sequence occupies residues 1–34 (MVSLLRCPSSKPYSSLICSLTLGAVVALSGVAYA).

It belongs to the OpgD/OpgG family.

It is found in the periplasm. It participates in glycan metabolism; osmoregulated periplasmic glucan (OPG) biosynthesis. Its function is as follows. Involved in the biosynthesis of osmoregulated periplasmic glucans (OPGs). The polypeptide is Glucans biosynthesis protein G (Shewanella baltica (strain OS155 / ATCC BAA-1091)).